Consider the following 146-residue polypeptide: Arginine vasopressin-induced protein 1 (146 aa).

Disordered regions lie at residues 1 to 31 (MGTP…RKQA) and 80 to 146 (RRKR…QIRH). Over residues 80–92 (RRKRPPRQNHCSR) the composition is skewed to basic residues. Residues 106–123 (QASTTDTASSEQFGNSRR) are compositionally biased toward polar residues.

Functionally, may be involved in MAP kinase activation, epithelial sodium channel (ENaC) down-regulation and cell cycling. This is Arginine vasopressin-induced protein 1 (Avpi1) from Rattus norvegicus (Rat).